A 342-amino-acid chain; its full sequence is Periplasmic protein TorT (342 aa).

Residues 1–18 form the signal peptide; that stretch reads MRVLLFLLLSLFMLPAFS.

Belongs to the bacterial solute-binding protein 2 family.

It is found in the periplasm. Functionally, upon binding a putative inducer it probably interacts with TorS and allows it to play a role in the induction of the torCAD operon for trimethylamine N-oxide reductase. This chain is Periplasmic protein TorT (torT), found in Escherichia coli (strain K12).